The sequence spans 148 residues: Single-stranded DNA-binding protein, mitochondrial (148 aa).

The N-terminal 16 residues, 1 to 16 (MFRRPVVQVLRQFVRH), are a transit peptide targeting the mitochondrion. The 112-residue stretch at 30 to 141 (LNRVQLLGRV…IIADNIIFLS (112 aa)) folds into the SSB domain. Phosphoserine occurs at positions 67 and 79. K113 carries the post-translational modification N6-acetyllysine. K122 is modified (N6-succinyllysine).

As to quaternary structure, homotetramer. Interacts with MPG/AAG, through inhibition of its glycosylase activity it potentially prevents formation of DNA breaks in ssDNA, ensuring that base removal primarily occurs in dsDNA. Interacts with POLDIP2. Interacts with PRIMPOL.

The protein resides in the mitochondrion. Its subcellular location is the mitochondrion matrix. It is found in the mitochondrion nucleoid. Its function is as follows. Binds preferentially and cooperatively to pyrimidine rich single-stranded DNA (ss-DNA). In vitro, required to maintain the copy number of mitochondrial DNA (mtDNA) and plays a crucial role during mtDNA replication by stimulating the activity of the replisome components POLG and TWNK at the replication fork. Promotes the activity of the gamma complex polymerase POLG, largely by organizing the template DNA and eliminating secondary structures to favor ss-DNA conformations that facilitate POLG activity. In addition it is able to promote the 5'-3' unwinding activity of the mtDNA helicase TWNK. May also function in mtDNA repair. The chain is Single-stranded DNA-binding protein, mitochondrial (SSBP1) from Bos taurus (Bovine).